A 537-amino-acid polypeptide reads, in one-letter code: Copine-1 (537 aa).

C2 domains follow at residues 1 to 114 (MAHC…TLPL) and 123 to 245 (GRGT…ECIH). Residues D21, D27, D80, D82, D92, D153, and D159 each coordinate Ca(2+). K171 is modified (N6-acetyllysine). Positions 214, 216, and 222 each coordinate Ca(2+). Positions 285–505 (NFTVGVDFTG…ALAQTVLAEV (221 aa)) constitute a VWFA domain.

This sequence belongs to the copine family. As to quaternary structure, homodimer; homodimerizes via its C2 domains. Interacts with p65/RELA (via N-terminus); this interaction induces proteolytic cleavage of p65/RELA subunit and inhibition of NF-kappa-B transcriptional activity. Interacts (via VWFA domain) with ACTB, CCDC22, MYCBP2, PPP5C, RDX and UBE2O. Requires Ca(2+) as cofactor. In terms of tissue distribution, expressed in liver, spleen, muscle, testis, adrenal (at protein level).

It localises to the nucleus. Its subcellular location is the cytoplasm. It is found in the cell membrane. Calcium-dependent phospholipid-binding protein that plays a role in calcium-mediated intracellular processes. Involved in the TNF-alpha receptor signaling pathway in a calcium-dependent manner. Exhibits calcium-dependent phospholipid binding properties. Plays a role in neuronal progenitor cell differentiation; induces neurite outgrowth via a AKT-dependent signaling cascade and calcium-independent manner. May recruit target proteins to the cell membrane in a calcium-dependent manner. May function in membrane trafficking. Involved in TNF-alpha-induced NF-kappa-B transcriptional repression by inducing endoprotease processing of the transcription factor NF-kappa-B p65/RELA subunit. Also induces endoprotease processing of NF-kappa-B p50/NFKB1, p52/NFKB2, RELB and REL. In Bos taurus (Bovine), this protein is Copine-1.